The primary structure comprises 277 residues: Thiazole synthase (277 aa).

Catalysis depends on Lys-107, which acts as the Schiff-base intermediate with DXP. 1-deoxy-D-xylulose 5-phosphate contacts are provided by residues Gly-168, 194–195, and 216–217; these read AG and AS.

Belongs to the ThiG family. As to quaternary structure, homotetramer. Forms heterodimers with either ThiH or ThiS.

The protein localises to the cytoplasm. The enzyme catalyses [ThiS sulfur-carrier protein]-C-terminal-Gly-aminoethanethioate + 2-iminoacetate + 1-deoxy-D-xylulose 5-phosphate = [ThiS sulfur-carrier protein]-C-terminal Gly-Gly + 2-[(2R,5Z)-2-carboxy-4-methylthiazol-5(2H)-ylidene]ethyl phosphate + 2 H2O + H(+). It participates in cofactor biosynthesis; thiamine diphosphate biosynthesis. Its function is as follows. Catalyzes the rearrangement of 1-deoxy-D-xylulose 5-phosphate (DXP) to produce the thiazole phosphate moiety of thiamine. Sulfur is provided by the thiocarboxylate moiety of the carrier protein ThiS. In vitro, sulfur can be provided by H(2)S. The protein is Thiazole synthase of Cutibacterium acnes (strain DSM 16379 / KPA171202) (Propionibacterium acnes).